Here is a 113-residue protein sequence, read N- to C-terminus: U11-theraphotoxin-Hhn1a (113 aa).

A signal peptide spans 1 to 21; that stretch reads MNTVRVTFLLVFVLAVSLGQA. A propeptide spanning residues 22–74 is cleaved from the precursor; it reads DKDENRMEMQEKTEQGNSYLDFAENLPLQKLEELEAKLLEEDSEESRNSRQKR. Residues 60–69 are compositionally biased toward basic and acidic residues; it reads LEEDSEESRN. Positions 60 to 83 are disordered; that stretch reads LEEDSEESRNSRQKRCIGEGVPCD. 3 disulfide bridges follow: cysteine 75/cysteine 90, cysteine 82/cysteine 95, and cysteine 89/cysteine 110.

It belongs to the neurotoxin 14 (magi-1) family. 01 (HNTX-16) subfamily. As to expression, expressed by the venom gland.

It is found in the secreted. Functionally, probable ion channel inhibitor. The protein is U11-theraphotoxin-Hhn1a of Cyriopagopus hainanus (Chinese bird spider).